Reading from the N-terminus, the 98-residue chain is NADH-ubiquinone oxidoreductase chain 4L (98 aa).

3 helical membrane-spanning segments follow: residues 2–22 (TSAFLNLTMAFTLSLLGTFMF), 26–46 (LMSTLLCLEGMMLSLFVMTST), and 59–79 (IPITILVFAACEAAVGLALLV).

The protein belongs to the complex I subunit 4L family. Core subunit of respiratory chain NADH dehydrogenase (Complex I) which is composed of 45 different subunits.

Its subcellular location is the mitochondrion inner membrane. The enzyme catalyses a ubiquinone + NADH + 5 H(+)(in) = a ubiquinol + NAD(+) + 4 H(+)(out). Its function is as follows. Core subunit of the mitochondrial membrane respiratory chain NADH dehydrogenase (Complex I) which catalyzes electron transfer from NADH through the respiratory chain, using ubiquinone as an electron acceptor. Part of the enzyme membrane arm which is embedded in the lipid bilayer and involved in proton translocation. This Rattus norvegicus (Rat) protein is NADH-ubiquinone oxidoreductase chain 4L.